Reading from the N-terminus, the 321-residue chain is Nitrilase blr3397 (321 aa).

The 268-residue stretch at Tyr-10 to Leu-277 folds into the CN hydrolase domain. Residue Glu-50 is the Proton acceptor of the active site. Lys-137 acts as the Proton donor in catalysis. Cys-171 (nucleophile) is an active-site residue.

The protein belongs to the carbon-nitrogen hydrolase superfamily. Nitrilase family. Homodecamer.

The catalysed reaction is an aliphatic nitrile + 2 H2O = a carboxylate + NH4(+). Nitrilase that acts on various kinds of nitrile compounds such as aliphatic and aromatic nitriles. Has higher activity toward aliphatic nitriles compared to aromatic nitriles. Among the different substrates tested, has the highest activity toward hydrocinnamonitrile. The polypeptide is Nitrilase blr3397 (Bradyrhizobium diazoefficiens (strain JCM 10833 / BCRC 13528 / IAM 13628 / NBRC 14792 / USDA 110)).